A 682-amino-acid polypeptide reads, in one-letter code: Elongation factor G (682 aa).

A tr-type G domain is found at 8–282 (QKFRNFGIMA…AVVDYLPSPV (275 aa)). GTP contacts are provided by residues 17–24 (AHIDAGKT), 81–85 (DTPGH), and 135–138 (NKMD).

Belongs to the TRAFAC class translation factor GTPase superfamily. Classic translation factor GTPase family. EF-G/EF-2 subfamily.

It localises to the cytoplasm. Its function is as follows. Catalyzes the GTP-dependent ribosomal translocation step during translation elongation. During this step, the ribosome changes from the pre-translocational (PRE) to the post-translocational (POST) state as the newly formed A-site-bound peptidyl-tRNA and P-site-bound deacylated tRNA move to the P and E sites, respectively. Catalyzes the coordinated movement of the two tRNA molecules, the mRNA and conformational changes in the ribosome. The sequence is that of Elongation factor G from Malacoplasma penetrans (strain HF-2) (Mycoplasma penetrans).